The primary structure comprises 93 residues: Small ribosomal subunit protein uS19 (93 aa).

It belongs to the universal ribosomal protein uS19 family.

Protein S19 forms a complex with S13 that binds strongly to the 16S ribosomal RNA. The sequence is that of Small ribosomal subunit protein uS19 from Synechococcus sp. (strain JA-3-3Ab) (Cyanobacteria bacterium Yellowstone A-Prime).